The sequence spans 305 residues: Peroxisome biogenesis factor 2 (305 aa).

Over 1 to 15 the chain is Peroxisomal matrix; the sequence is MASRKENAKSANRVL. Residues 16–42 traverse the membrane as a helical segment; the sequence is RISQLDALELNKALEQLVWSQFTQCFH. Topologically, residues 43-48 are cytoplasmic; sequence GFKPGL. Residues 49-74 form a helical membrane-spanning segment; the sequence is LARFEPEVKACLWVFLWRFTIYSKNA. The Peroxisomal matrix portion of the chain corresponds to 75–98; the sequence is TVGQSVLNIKYKNDFSPNLRYQPP. N6-acetyllysine is present on Lys84. Residues 99-125 form a helical membrane-spanning segment; the sequence is SKNQKIWYAVCTIGGRWLEERCYDLFR. Residues 126-133 are Cytoplasmic-facing; the sequence is NHHLASFG. A helical membrane pass occupies residues 134–160; it reads KVKQCVNFVIGLLKLGGLINFLIFLQR. The Peroxisomal matrix segment spans residues 161–187; that stretch reads GKFATLTERLLGIHSVFCKPQNICEVG. Residues 188 to 211 traverse the membrane as a helical segment; the sequence is FEYMNRELLWHGFAEFLIFLLPLI. At 212–305 the chain is on the cytoplasmic side; it reads NVQKLKAKLS…GIEMSEVNAL (94 aa). Zn(2+)-binding residues include Cys244, Cys247, Cys259, His261, Cys264, Cys267, Cys280, and Cys283. The RING-type zinc finger occupies 244-284; sequence CALCGEWPTMPHTIGCEHIFCYFCAKSSFLFDVYFTCPKCG.

Belongs to the pex2/pex10/pex12 family. In terms of assembly, component of the PEX2-PEX10-PEX12 retrotranslocation channel, composed of PEX2, PEX10 and PEX12. In terms of processing, forms intramolecular and intermolecular disulfide bonds in response to reactive oxygen species (ROS), promoting higher stability.

The protein resides in the peroxisome membrane. It carries out the reaction [E2 ubiquitin-conjugating enzyme]-S-ubiquitinyl-L-cysteine + [acceptor protein]-L-cysteine = [E2 ubiquitin-conjugating enzyme]-L-cysteine + [acceptor protein]-S-ubiquitinyl-L-cysteine.. It catalyses the reaction S-ubiquitinyl-[E2 ubiquitin-conjugating enzyme]-L-cysteine + [acceptor protein]-L-lysine = [E2 ubiquitin-conjugating enzyme]-L-cysteine + N(6)-ubiquitinyl-[acceptor protein]-L-lysine.. The protein operates within protein modification; protein ubiquitination. Its function is as follows. E3 ubiquitin-protein ligase component of a retrotranslocation channel required for peroxisome organization by mediating export of the PEX5 receptor from peroxisomes to the cytosol, thereby promoting PEX5 recycling. The retrotranslocation channel is composed of PEX2, PEX10 and PEX12; each subunit contributing transmembrane segments that coassemble into an open channel that specifically allows the passage of PEX5 through the peroxisomal membrane. PEX2 also regulates peroxisome organization by acting as a E3 ubiquitin-protein ligase. PEX2 ubiquitinates PEX5 during its passage through the retrotranslocation channel: catalyzes monoubiquitination of PEX5 at 'Cys-11', a modification that acts as a signal for PEX5 extraction into the cytosol. Required for pexophagy in response to starvation by mediating ubiquitination of peroxisomal proteins, such as PEX5 and ABCD3/PMP70. Also involved in the response to reactive oxygen species (ROS) by mediating 'Lys-48'-linked polyubiquitination and subsequent degradation of PNPLA2/ATGL, thereby regulating lipolysis. This Homo sapiens (Human) protein is Peroxisome biogenesis factor 2.